Consider the following 491-residue polypeptide: Probable malate:quinone oxidoreductase (491 aa).

It belongs to the MQO family. Requires FAD as cofactor.

It carries out the reaction (S)-malate + a quinone = a quinol + oxaloacetate. It functions in the pathway carbohydrate metabolism; tricarboxylic acid cycle; oxaloacetate from (S)-malate (quinone route): step 1/1. The sequence is that of Probable malate:quinone oxidoreductase from Leifsonia xyli subsp. xyli (strain CTCB07).